The primary structure comprises 429 residues: Ribosomal RNA small subunit methyltransferase B (429 aa).

Residues 254–260 (CAAPGGK), Asp277, Asp303, and Asp322 contribute to the S-adenosyl-L-methionine site. The active-site Nucleophile is the Cys375.

It belongs to the class I-like SAM-binding methyltransferase superfamily. RsmB/NOP family.

Its subcellular location is the cytoplasm. It carries out the reaction cytidine(967) in 16S rRNA + S-adenosyl-L-methionine = 5-methylcytidine(967) in 16S rRNA + S-adenosyl-L-homocysteine + H(+). Its function is as follows. Specifically methylates the cytosine at position 967 (m5C967) of 16S rRNA. In Escherichia coli O157:H7, this protein is Ribosomal RNA small subunit methyltransferase B.